A 475-amino-acid polypeptide reads, in one-letter code: MKKLLLILCCITLLAACQKVVVEQEEPVFIPEPTELVVGTLYGPQIYFTSGQGDSGYDYEMAERFAKYLNLKLKMRAFANISELYAAMRSGEIDIIAAGLGDTPARREQFRVGPPLYRVDQVLVYRQGTPVPKNINSLNGEITVITDSSFVDTLTDLQKSNPDLVWNQEKDKDAEELLTMIAAGDIPYTIADSTSLDINRRFMPELREGLVLKKKQPVVWLLPANNSDKLMSQLLAFWHIEKRSGTLAHLNEKYFAHVKRFDYVDTRAFIRAIDNKLPKYQSTFEKYAGDIDWRKLAATAYQESHWNPNARSPTGVRGLMMLTLPTAKQVGIKNRLDPYQSIQGGAKYLNSMLERLPESIPDSQRMWFALASYNIGLGHVEDARKLAQTQGLNPSAWRDVKSVLPLLQKRKYYKKTRYGYARGNEAVHYVDSIRRYYDTLVWIDNQNMLLELKKENIQMAENLEQKTEAAQPQQP.

Residues 1 to 15 form the signal peptide; sequence MKKLLLILCCITLLA. The tract at residues 16–258 is non-LT domain; the sequence is ACQKVVVEQE…HLNEKYFAHV (243 aa). Residues 259–475 are LT domain; the sequence is KRFDYVDTRA…KTEAAQPQQP (217 aa). Glu303 is a catalytic residue.

The protein in the N-terminal section; belongs to the bacterial solute-binding protein 3 family. In the C-terminal section; belongs to the transglycosylase Slt family.

It is found in the cell outer membrane. It carries out the reaction Exolytic cleavage of the (1-&gt;4)-beta-glycosidic linkage between N-acetylmuramic acid (MurNAc) and N-acetylglucosamine (GlcNAc) residues in peptidoglycan, from either the reducing or the non-reducing ends of the peptidoglycan chains, with concomitant formation of a 1,6-anhydrobond in the MurNAc residue.. Murein-degrading enzyme that degrades murein glycan strands and insoluble, high-molecular weight murein sacculi, with the concomitant formation of a 1,6-anhydromuramoyl product. Lytic transglycosylases (LTs) play an integral role in the metabolism of the peptidoglycan (PG) sacculus. Their lytic action creates space within the PG sacculus to allow for its expansion as well as for the insertion of various structures such as secretion systems and flagella. The sequence is that of Membrane-bound lytic murein transglycosylase F from Shewanella halifaxensis (strain HAW-EB4).